The chain runs to 298 residues: Glycine--tRNA ligase alpha subunit (298 aa).

The protein belongs to the class-II aminoacyl-tRNA synthetase family. As to quaternary structure, tetramer of two alpha and two beta subunits.

The protein localises to the cytoplasm. The catalysed reaction is tRNA(Gly) + glycine + ATP = glycyl-tRNA(Gly) + AMP + diphosphate. The chain is Glycine--tRNA ligase alpha subunit from Helicobacter pylori (strain HPAG1).